The primary structure comprises 357 residues: Dynein axonemal assembly factor 10 (357 aa).

4 WD repeats span residues 80–127, 132–170, 184–223, and 277–321; these read EFTN…IPIW, AHQG…NSAN, EQTN…IQST, and EPNQ…IDKV.

In terms of assembly, interacts with PIH1D1; the interaction associates DNAAF10 with the R2TP complex. Interacts with several dynein axonemal assembly factors.

It is found in the dynein axonemal particle. Its function is as follows. Key assembly factor specifically required for the stability of axonemal dynein heavy chains in cytoplasm. The sequence is that of Dynein axonemal assembly factor 10 (dnaaf10) from Dictyostelium discoideum (Social amoeba).